We begin with the raw amino-acid sequence, 657 residues long: MQTPLIDLRNIRKSYGGGDSPQVDVLRGIDLSIHAGEFVAIVGASGSGKSTLMNILGCLDRPTSGEYLFAGENVAHLDSDELAWLRREAFGFVFQGYHLIPSASAQENVEMPAIYAGTPTAERHTRAAALLERLGLASRSGNRPHQLSGGQQQRVSIARALMNGGHIILADEPTGALDSHSGAEVMALLDELASQGHVVILITHDREVAARAKRIIEIRDGEIISDTATSDPSVQLSANAGALQAVDLRQRLADGSEPTGAWKGELLEAIQAAWRVMWINRFRTALTLLGIIIGVASVVVMLAVGEGSKRQVMAQMGAFGSNIIYLSGYSPNPRTPEGIVTLDDVAALANLPQVKRIMAVNGAKAGVRFGNADYMSYVGGNDTNFPEIFNWPVAQGSYFSEADESSAAAVAVIGHKVREKLLKDVANPIGQYILIENVPFQVVGVLSEKGASSGDSDSDDRIAVPYSAASIRLFGDHNPQYVAIAAADASRVKQTEQEIDELMLRMHGGKRDFELTNNAAMIQAEARTQNTLSLMLGAIAAISLLVGGIGVMNIMLMTVRERTREIGIRMATGARQRDILRQFLTEAVMLSVVGGLAGIGVALIIGGILILSEVAVAFSLAAVLGAFACALVTGVIFGFMPARKAARLDPVTALTSE.

The ABC transporter domain occupies 6-245; that stretch reads IDLRNIRKSY…LSANAGALQA (240 aa). 43-50 serves as a coordination point for ATP; the sequence is GASGSGKS. Helical transmembrane passes span 285–305, 532–552, 590–610, and 620–640; these read ALTLLGIIIGVASVVVMLAVG, LSLMLGAIAAISLLVGGIGVM, LSVVGGLAGIGVALIIGGILI, and LAAVLGAFACALVTGVIFGFM.

The protein belongs to the ABC transporter superfamily. Macrolide exporter (TC 3.A.1.122) family. In terms of assembly, part of the tripartite efflux system PvdRT-OpmQ, which is composed of an inner membrane component with both ATPase and permease domains, PvdT, a periplasmic membrane fusion protein, PvdR, and an outer membrane component, OpmQ.

The protein resides in the cell inner membrane. Functionally, part of the tripartite efflux system PvdRT-OpmQ required for the secretion into the extracellular milieu of the siderophore pyoverdine (PVD), which is involved in iron acquisition. This subunit binds PVD and drives its secretion by hydrolyzing ATP. The system is responsible for export of newly synthesized PVD after the final steps of biosynthesis have taken place in the periplasm. It is also responsible for recycling of PVD after internalization of ferri-PVD into the periplasm by the outer-membrane receptor FpvA and release of iron from PVD, thus making PVD available for new cycles of iron uptake. In Pseudomonas fluorescens (strain ATCC BAA-477 / NRRL B-23932 / Pf-5), this protein is Pyoverdine export ATP-binding/permease protein PvdT.